The sequence spans 361 residues: Peptidyl-prolyl cis-trans isomerase CYP40 (361 aa).

In terms of domain architecture, PPIase cyclophilin-type spans 7-172; the sequence is FMDISIGGEL…QDVVIHDCGE (166 aa). 2 TPR repeats span residues 212–245 and 298–331; these read VDFVKAHGNEHFKKQDYKMALRKYRKALRYLDIC and VKALFRQGQAYMALNNVDAAAESLEKALQFEPND.

Belongs to the cyclophilin-type PPIase family. In terms of tissue distribution, expressed at low levels in seedlings, roots, shoots, leaves, stems, inflorescences, flowers and siliques, with highest levels dividing tissues.

It localises to the cytoplasm. The catalysed reaction is [protein]-peptidylproline (omega=180) = [protein]-peptidylproline (omega=0). Its activity is regulated as follows. Binds cyclosporin A (CsA). CsA mediates some of its effects via an inhibitory action on PPIase. Functionally, PPIases accelerate the folding of proteins. It catalyzes the cis-trans isomerization of proline imidic peptide bonds in oligopeptides. Involved in promoting the expression of the juvenile phase of vegetative development, and, to a lower extent, in regulating the positioning of floral buds, floral morphogenesis and the expression of HSPs. Collaboratively with RBL and ULT1, influences floral meristem (FM) determinacy in an AGAMOUS and SUPERMAN-dependent manner, thus contributing to the floral developmental homeostasis. The sequence is that of Peptidyl-prolyl cis-trans isomerase CYP40 from Arabidopsis thaliana (Mouse-ear cress).